A 130-amino-acid polypeptide reads, in one-letter code: Osteocrin (130 aa).

Positions 1-25 are cleaved as a signal peptide; it reads MLDWRLASTHFILAMIVMLWGSGKA. R129 is modified (arginine amide).

It belongs to the Osteocrin family. Interacts with NPR3. As to expression, expressed in skeletal muscle and to a much lesser extent in bone, brown adipose tissue, spleen and testis. Not expressed in neurons.

It is found in the secreted. In terms of biological role, hormone that acts as a ligand for natriuretic peptide receptor NPR3/NPR-C and promotes bone growth and physical endurance in muscle. Acts as a regulator of osteoblast differentiation and bone growth by binding to natriuretic peptide receptor NPR3/NPR-C, thereby preventing binding between NPR3/NPR-C and natriuretic peptides, leading to increase cGMP production. Required to enhance physical endurance: induced following physical exercise in muscle and promotes cGMP production, probably by interacting with NPR3/NPR-C. May act as an autocrine and paracrine factor linked to glucose metabolism in skeletal muscle. The chain is Osteocrin from Mus musculus (Mouse).